The sequence spans 125 residues: U-scoloptoxin(05)-Er1a (125 aa).

Positions 1–20 (MLSLGVSIFLLVFLIPENSG) are cleaved as a signal peptide.

It belongs to the scoloptoxin-05 family. In terms of processing, contains 4 disulfide bonds. Expressed by the venom gland.

The protein localises to the secreted. This chain is U-scoloptoxin(05)-Er1a, found in Ethmostigmus rubripes (Giant centipede).